Reading from the N-terminus, the 196-residue chain is Protein kinase OspG (196 aa).

It belongs to the protein kinase superfamily. In terms of processing, autophosphorylated.

Its subcellular location is the secreted. It is found in the host cell. Effector proteins function to alter host cell physiology and promote bacterial survival in host tissues. This protein is a kinase that is involved in down-regulation of the host innate response induced by invasive bacteria. The polypeptide is Protein kinase OspG (ospG) (Shigella flexneri serotype X (strain 2002017)).